The following is a 199-amino-acid chain: NAD(P)H dehydrogenase (quinone) (199 aa).

In terms of domain architecture, Flavodoxin-like spans 4 to 190; sequence ILVLYYSMYG…TIARYQGEHV (187 aa). FMN is bound by residues 10 to 15 and 79 to 81; these read SMYGHI and TRF. An NAD(+)-binding site is contributed by Y12. Residue W99 participates in substrate binding. Residues 114–119 and H134 each bind FMN; that span reads STGTGG.

The protein belongs to the WrbA family. The cofactor is FMN.

It catalyses the reaction a quinone + NADH + H(+) = a quinol + NAD(+). The catalysed reaction is a quinone + NADPH + H(+) = a quinol + NADP(+). This is NAD(P)H dehydrogenase (quinone) from Serratia proteamaculans (strain 568).